A 279-amino-acid polypeptide reads, in one-letter code: Putative polysaccharide deacetylase YxkH (279 aa).

A signal peptide spans 1–19 (MKRLFLSIFLLGSCLALAA). The N-palmitoyl cysteine moiety is linked to residue Cys20. Cys20 carries S-diacylglycerol cysteine lipidation. A disordered region spans residues 29-51 (QPMPKAEQKKPEKKAVQVQKKED). Over residues 34–51 (AEQKKPEKKAVQVQKKED) the composition is skewed to basic and acidic residues. Positions 119-279 (KCVLITFDDG…AFGAYIESMK (161 aa)) constitute a NodB homology domain.

It belongs to the polysaccharide deacetylase family.

It localises to the cell membrane. The sequence is that of Putative polysaccharide deacetylase YxkH (yxkH) from Bacillus subtilis (strain 168).